The following is a 468-amino-acid chain: Ubiquitin carboxyl-terminal hydrolase MINDY-1 (468 aa).

The segment covering 1–19 (MEQPQTENPAPSKATSAET) has biased composition (polar residues). A disordered region spans residues 1–105 (MEQPQTENPA…RPQELPQSPR (105 aa)). Positions 22–41 (SENHEALSGPEKHPQDKDGA) are enriched in basic and acidic residues. Residues 43-54 (ADGAAGEQEPGD) show a composition bias toward low complexity. Pro residues predominate over residues 68–80 (CPPPEASSSPPGP). A Phosphoserine modification is found at Ser103. The active-site Nucleophile is the Cys137. His319 (proton acceptor) is an active-site residue. Positions 388–427 (QVDQDYLIALSLQQQQQPQGTLGLSDLELAQQLQQEEYQQ) are ubiquitin-binding domain (UBD). The span at 423-432 (EEYQQQQAVQ) shows a compositional bias: low complexity. Residues 423–468 (EEYQQQQAVQPVRTRAPSPQGRGATSGRPAGERRQRSKTESDCVLL) form a disordered region. Residue Ser440 is modified to Phosphoserine. Basic and acidic residues predominate over residues 452–468 (AGERRQRSKTESDCVLL).

This sequence belongs to the MINDY deubiquitinase family. FAM63 subfamily.

The enzyme catalyses Thiol-dependent hydrolysis of ester, thioester, amide, peptide and isopeptide bonds formed by the C-terminal Gly of ubiquitin (a 76-residue protein attached to proteins as an intracellular targeting signal).. Hydrolase that can specifically remove 'Lys-48'-linked conjugated ubiquitin from proteins. Has exodeubiquitinase activity and has a preference for long polyubiquitin chains. May play a regulatory role at the level of protein turnover. The protein is Ubiquitin carboxyl-terminal hydrolase MINDY-1 (Mindy1) of Mus musculus (Mouse).